The chain runs to 337 residues: Vacuolar protein sorting-associated protein 26B-A (337 aa).

A disordered region spans residues 313-337 (RFEGTSHPETRPQHSGAAAVEQEHE).

It belongs to the VPS26 family. Component of the heterotrimeric retromer cargo-selective complex (CSC) which is believed to associate with variable sorting nexins to form functionally distinct retromer complex variants.

The protein resides in the cytoplasm. Its subcellular location is the endosome membrane. The protein localises to the early endosome. Functionally, acts as a component of the retromer cargo-selective complex (CSC). The CSC is believed to be the core functional component of retromer or respective retromer complex variants acting to prevent missorting of selected transmembrane cargo proteins into the lysosomal degradation pathway. Retromer mediates retrograde transport of cargo proteins from endosomes to the trans-Golgi network (TGN). The sequence is that of Vacuolar protein sorting-associated protein 26B-A (vps26b-a) from Xenopus laevis (African clawed frog).